A 96-amino-acid chain; its full sequence is Large ribosomal subunit protein bL27 (96 aa).

Residues 1-9 (MLNMNLQLL) constitute a propeptide that is removed on maturation.

It belongs to the bacterial ribosomal protein bL27 family. In terms of processing, the N-terminus is cleaved by ribosomal processing cysteine protease Prp.

The protein is Large ribosomal subunit protein bL27 of Clostridioides difficile (strain 630) (Peptoclostridium difficile).